A 209-amino-acid polypeptide reads, in one-letter code: Protein-L-isoaspartate O-methyltransferase (209 aa).

Ser55 is an active-site residue.

This sequence belongs to the methyltransferase superfamily. L-isoaspartyl/D-aspartyl protein methyltransferase family.

It localises to the cytoplasm. The enzyme catalyses [protein]-L-isoaspartate + S-adenosyl-L-methionine = [protein]-L-isoaspartate alpha-methyl ester + S-adenosyl-L-homocysteine. Its function is as follows. Catalyzes the methyl esterification of L-isoaspartyl residues in peptides and proteins that result from spontaneous decomposition of normal L-aspartyl and L-asparaginyl residues. It plays a role in the repair and/or degradation of damaged proteins. The chain is Protein-L-isoaspartate O-methyltransferase from Anaeromyxobacter dehalogenans (strain 2CP-C).